The sequence spans 689 residues: Glycine--tRNA ligase beta subunit (689 aa).

The protein belongs to the class-II aminoacyl-tRNA synthetase family. In terms of assembly, tetramer of two alpha and two beta subunits.

The protein localises to the cytoplasm. It catalyses the reaction tRNA(Gly) + glycine + ATP = glycyl-tRNA(Gly) + AMP + diphosphate. The chain is Glycine--tRNA ligase beta subunit from Salmonella typhi.